The chain runs to 38 residues: Zinc-containing ferredoxin (38 aa).

The span at 1 to 11 shows a compositional bias: polar residues; the sequence is GIDPNFRTSRP. Positions 1–38 are disordered; sequence GIDPNFRTSRPVTGDHAGHKVYAPADPPVKEKALGIHG. The N-terminal extension stretch occupies residues 1–38; it reads GIDPNFRTSRPVTGDHAGHKVYAPADPPVKEKALGIHG. H16 and H19 together coordinate Zn(2+). Residues 28 to 38 are compositionally biased toward basic and acidic residues; the sequence is PVKEKALGIHG. Residue K30 is modified to N6-methyllysine. H37 is a binding site for Zn(2+).

Requires [3Fe-4S] cluster as cofactor. It depends on [4Fe-4S] cluster as a cofactor. Zn(2+) is required as a cofactor.

In terms of biological role, ferredoxins are iron-sulfur proteins that transfer electrons in a wide variety of metabolic reactions. The protein is Zinc-containing ferredoxin (zfx) of Metallosphaera prunae.